The following is a 1069-amino-acid chain: Protocadherin-8 (1069 aa).

An N-terminal signal peptide occupies residues Met1–Ser29. 6 Cadherin domains span residues Lys30–Phe135, Pro136–Phe245, Gln247–Ile354, Gln393–Phe497, Thr498–Leu609, and Ala615–Ser721. Over Lys30–Pro747 the chain is Extracellular. The N-linked (GlcNAc...) asparagine glycan is linked to Asn616. Residues Pro719 to Ser738 are disordered. A helical transmembrane segment spans residues Leu748–Ile768. The Cytoplasmic portion of the chain corresponds to Ala769–Val1069. Disordered regions lie at residues Lys777–Ser859, Arg905–Ser927, and Leu1031–Val1069. 2 stretches are compositionally biased toward basic and acidic residues: residues Arg780 to Pro790 and Arg905 to Ser920. A Phosphoserine modification is found at Ser1052.

The N-terminal extracellular domain forms homophilic interactions; these interactions activate p38 MAPK via TAOK2 and trigger endocytosis. Interacts with CDH2; this interaction may lead to CDH2 cointernalization. Interacts with CDH11. Interacts with TAOK2. As to expression, enriched in brain relative to peripheral tissues, with low expression in the testis. Expressed in hippocampal neurons (at protein level).

It localises to the cell membrane. The protein localises to the cell projection. It is found in the dendrite. Its subcellular location is the presynaptic cell membrane. The protein resides in the postsynaptic cell membrane. Functionally, calcium-dependent cell-adhesion protein. May play a role in activity-induced synaptic reorganization underlying long term memory. Could be involved in CDH2 internalization through TAOK2/p38 MAPK pathway. In hippocampal neurons, may play a role in the down-regulation of dendritic spines, maybe through its action on CDH2 endocytosis. The chain is Protocadherin-8 (Pcdh8) from Rattus norvegicus (Rat).